Reading from the N-terminus, the 217-residue chain is Putative thymidylate synthase (217 aa).

The active site involves cysteine 139.

Belongs to the thymidylate synthase family. Archaeal-type ThyA subfamily. Monomer.

Its subcellular location is the cytoplasm. Its pathway is pyrimidine metabolism; dTTP biosynthesis. In terms of biological role, may catalyze the biosynthesis of dTMP using an unknown cosubstrate. The protein is Putative thymidylate synthase of Methanosarcina acetivorans (strain ATCC 35395 / DSM 2834 / JCM 12185 / C2A).